Consider the following 126-residue polypeptide: Fatty acid-binding protein, liver (126 aa).

Alanine 2 bears the N-acetylalanine mark. Cholate-binding residues include arginine 56, glutamine 57, lysine 77, histidine 99, and glutamine 101.

The protein belongs to the calycin superfamily. Fatty-acid binding protein (FABP) family.

The protein localises to the cytoplasm. In terms of biological role, binds free fatty acids and their coenzyme A derivatives, bilirubin, and some other small molecules in the cytoplasm. May be involved in intracellular lipid transport. Binds 2 molecules of cholate per subunit. This chain is Fatty acid-binding protein, liver (FABP1), found in Gallus gallus (Chicken).